Reading from the N-terminus, the 621-residue chain is UvrABC system protein C (621 aa).

A GIY-YIG domain is found at 13 to 92 (EKPGVYMMRN…IKENRPKYNV (80 aa)). The UVR domain maps to 205-240 (DELVRKIEEKMKAAAISMDFENAARYRDQIIALNNI).

It belongs to the UvrC family. In terms of assembly, interacts with UvrB in an incision complex.

It localises to the cytoplasm. The UvrABC repair system catalyzes the recognition and processing of DNA lesions. UvrC both incises the 5' and 3' sides of the lesion. The N-terminal half is responsible for the 3' incision and the C-terminal half is responsible for the 5' incision. This Alkaliphilus oremlandii (strain OhILAs) (Clostridium oremlandii (strain OhILAs)) protein is UvrABC system protein C.